Consider the following 351-residue polypeptide: uncharacterized protein (351 aa).

Asp-215, Asp-226, His-290, Glu-319, and Glu-333 together coordinate Mn(2+).

The protein belongs to the peptidase M24B family. Requires Mn(2+) as cofactor.

This is an uncharacterized protein from Staphylococcus aureus (strain MSSA476).